We begin with the raw amino-acid sequence, 127 residues long: Fluoride-specific ion channel FluC (127 aa).

The next 4 membrane-spanning stretches (helical) occupy residues 7–27, 37–57, 69–89, and 102–122; these read LILI…MGLI, FGTL…MAMI, LFMI…SAEV, and LGIM…GVLI. Residues Gly77 and Thr80 each coordinate Na(+).

This sequence belongs to the fluoride channel Fluc/FEX (TC 1.A.43) family.

It localises to the cell inner membrane. It catalyses the reaction fluoride(in) = fluoride(out). Na(+) is not transported, but it plays an essential structural role and its presence is essential for fluoride channel function. Functionally, fluoride-specific ion channel. Important for reducing fluoride concentration in the cell, thus reducing its toxicity. The sequence is that of Fluoride-specific ion channel FluC from Mannheimia succiniciproducens (strain KCTC 0769BP / MBEL55E).